We begin with the raw amino-acid sequence, 63 residues long: H/ACA ribonucleoprotein complex subunit 3-like protein (63 aa).

The interval 18-40 (KMDPEGKPTLSAHPARFSPDDKY) is disordered.

Belongs to the NOP10 family. As to quaternary structure, component of the small nucleolar ribonucleoprotein particles containing H/ACA-type snoRNAs (H/ACA snoRNPs).

It is found in the nucleus. It localises to the nucleolus. Its function is as follows. Required for ribosome biogenesis. Part of a complex which catalyzes pseudouridylation of rRNA. This involves the isomerization of uridine such that the ribose is subsequently attached to C5, instead of the normal N1. Pseudouridine ('psi') residues may serve to stabilize the conformation of rRNAs. This chain is H/ACA ribonucleoprotein complex subunit 3-like protein, found in Trypanosoma cruzi.